A 134-amino-acid chain; its full sequence is Prolactin (134 aa).

An intrachain disulfide couples C126 to C134.

This sequence belongs to the somatotropin/prolactin family.

The protein localises to the secreted. The sequence is that of Prolactin from Bufo japonicus (Japanese common toad).